The chain runs to 125 residues: Anticoagulant salivary protein 14 (125 aa).

Positions 1–21 (MGLTGTMLVLVSLAFFGSAAA) are cleaved as a signal peptide. N-linked (GlcNAc...) asparagine glycosylation is found at Asn-26, Asn-81, and Asn-87. Residues 75 to 86 (GECHLTNNSGGP) are compositionally biased toward polar residues. The interval 75–125 (GECHLTNNSGGPNETDDYTPAPTEKPKQKKKKTKKTKKPKRKSKKDQEKNL) is disordered. The interval 91–125 (DYTPAPTEKPKQKKKKTKKTKKPKRKSKKDQEKNL) is responsible for anticoagulant activity. Basic residues predominate over residues 101 to 118 (KQKKKKTKKTKKPKRKSK).

It belongs to the salp14 family. As to expression, salivary gland (at protein level). Saliva (at protein level).

The protein resides in the secreted. Its function is as follows. Salivary anticoagulant protein that facilitates blood feeding of adult ticks on vertebrate species. Inhibits host coagulation factor Xa (F10). Blocks the assembly and/or early activity of the prothrombinase complex (Xa-Va/F10-F5). Inhibits the lectin pathway of complement system activation in the host. The chain is Anticoagulant salivary protein 14 from Ixodes scapularis (Black-legged tick).